Reading from the N-terminus, the 233-residue chain is Large ribosomal subunit protein uL3 (233 aa).

Residues 146-171 (GSQRASHGNSRSHRVPGSIGQAQDPG) form a disordered region. Residue glutamine 168 is modified to N5-methylglutamine.

It belongs to the universal ribosomal protein uL3 family. Part of the 50S ribosomal subunit. Forms a cluster with proteins L14 and L19. Post-translationally, methylated by PrmB.

One of the primary rRNA binding proteins, it binds directly near the 3'-end of the 23S rRNA, where it nucleates assembly of the 50S subunit. This is Large ribosomal subunit protein uL3 from Bordetella bronchiseptica (strain ATCC BAA-588 / NCTC 13252 / RB50) (Alcaligenes bronchisepticus).